The sequence spans 206 residues: uncharacterized protein (206 aa).

The tract at residues 147 to 206 (REEKAQKSKSKSRNQDERGSPLDERLGPKVSDLTLMERIFQVRRKPRKSRRDRRSRVSKR) is disordered. Residues 159–173 (RNQDERGSPLDERLG) are compositionally biased toward basic and acidic residues. The span at 187-206 (QVRRKPRKSRRDRRSRVSKR) shows a compositional bias: basic residues.

This is an uncharacterized protein from Schizosaccharomyces pombe (strain 972 / ATCC 24843) (Fission yeast).